Consider the following 365-residue polypeptide: A-type ATP synthase subunit C (365 aa).

The protein belongs to the V-ATPase V0D/AC39 subunit family. In terms of assembly, has multiple subunits with at least A(3), B(3), C, D, E, F, H, I and proteolipid K(x).

It localises to the cell membrane. Component of the A-type ATP synthase that produces ATP from ADP in the presence of a proton gradient across the membrane. This is A-type ATP synthase subunit C from Thermococcus kodakarensis (strain ATCC BAA-918 / JCM 12380 / KOD1) (Pyrococcus kodakaraensis (strain KOD1)).